The chain runs to 206 residues: Putative acetyltransferase OgpAT (206 aa).

The region spanning 5–205 (VVIRRATAAD…EVVVGRRLLD (201 aa)) is the N-acetyltransferase domain. Residues 135 to 138 (HIDL), 144 to 148 (GRGVG), 175 to 177 (NPR), and H184 each bind acetyl-CoA.

Belongs to the acetyltransferase family. In terms of assembly, monomer.

Binds acetyl-CoA, but not butyryl-CoA or decanoyl-CoA. May have acetyltransferase activity. The protein is Putative acetyltransferase OgpAT of Oceanicola granulosus (strain ATCC BAA-861 / DSM 15982 / KCTC 12143 / HTCC2516).